Reading from the N-terminus, the 92-residue chain is Small ribosomal subunit protein uS19c (92 aa).

It belongs to the universal ribosomal protein uS19 family.

It is found in the plastid. It localises to the chloroplast. Functionally, protein S19 forms a complex with S13 that binds strongly to the 16S ribosomal RNA. In Picea abies (Norway spruce), this protein is Small ribosomal subunit protein uS19c (rps19).